A 197-amino-acid polypeptide reads, in one-letter code: MSSAPAPGPAPASLTLWDEEDFQGRRCRLLSDCANVCERGGLPRVRSVKVENGVWVAFEYPDFQGQQFILEKGDYPRWSAWSGSSSHNSNQLLSFRPVLCANHNDSRVTLFEGDNFQGCKFDLVDDYPSLPSMGWASKDVGSLKVSSGAWVAYQYPGYRGYQYVLERDRHSGEFCTYGELGTQAHTGQLQSIRRVQH.

Positions 1–11 (MSSAPAPGPAP) are N-terminal arm. Beta/gamma crystallin 'Greek key' domains follow at residues 12 to 52 (ASLT…KVEN) and 53 to 99 (GVWV…RPVL). Positions 100–105 (CANHND) are connecting peptide. 2 Beta/gamma crystallin 'Greek key' domains span residues 106–147 (SRVT…KVSS) and 148–196 (GAWV…RRVQ).

This sequence belongs to the beta/gamma-crystallin family. Homo/heterodimer, or complexes of higher-order. The structure of beta-crystallin oligomers seems to be stabilized through interactions between the N-terminal arms.

In terms of biological role, crystallins are the dominant structural components of the vertebrate eye lens. This is Beta-crystallin A2 (CRYBA2) from Homo sapiens (Human).